The sequence spans 1516 residues: EF-hand calcium-binding domain-containing protein 6 (1516 aa).

A disordered region spans residues 1 to 23; sequence MKRNGTRLNFAKANSTKSGSTRA. A compositionally biased stretch (polar residues) spans 12–21; the sequence is KANSTKSGST. 5 consecutive EF-hand domains span residues 96–131, 197–232, 321–356, 444–462, and 528–563; these read SRRDDIKKVFQILDRNHNQMVTKGDLKRVITAFLIP, RNMRSIRKVFQVMDVNNTGLVQPQELRRVLETFCLR, KSYEKIEKALSAGDPSKGGYISLNYLKVVLDTFIYR, SGHITWEELRHILNCMVAK, and RNLQAFYSMLQSYDLRDTGTIGKNNFRKVMRVFCPY. Ca(2+) contacts are provided by aspartate 109, asparagine 111, asparagine 113, methionine 115, aspartate 120, aspartate 210, asparagine 212, threonine 214, and glutamate 221. The segment at 618–638 is disordered; it reads EEPGQQDERTQPSGEKTSEIN. Residues 628–638 are compositionally biased toward polar residues; it reads QPSGEKTSEIN. EF-hand domains follow at residues 674-690, 763-798, 905-940, 1086-1121, 1193-1228, and 1229-1264; these read KINQEEFRKVLERSGMP, ESFRDVYSAFFRIDLDRDGIISMHDFHRLLQYLQLN, LTPREFEKLWQNYDTEGRGYITYQEFLHRLGIRYSP, SSQPALVEAFSALDKEDTGFVKAMEFGDVLRSVCQK, SHYHTIVQEFENFDTLKSNTVSRDEFRSICTRHIQI, and LTDEQFDRLWSELPVNAKGRLKYQDFLSKLSIERVP. Ca(2+) is bound by residues aspartate 776, aspartate 778, aspartate 780, and aspartate 787. The residue at position 906 (threonine 906) is a Phosphothreonine. The tract at residues 1263–1318 is disordered; sequence VPSPPMAAGDSGESTMAQRGSSAPEFSQGTRSNLYSPPRDSRVGLKSRSHPCTPVG. Serine 1265 carries the post-translational modification Phosphoserine. Residues 1274-1297 show a composition bias toward polar residues; it reads GESTMAQRGSSAPEFSQGTRSNLY. A Phosphoserine modification is found at serine 1311. Residues threonine 1315 and threonine 1319 each carry the phosphothreonine modification. The interval 1318–1516 is interaction with PARK7; the sequence is GTPPLQNCEP…YNDFLRAFLQ (199 aa). EF-hand domains are found at residues 1348-1373, 1374-1409, 1454-1484, and 1485-1516; these read KEKDTDKQGTISAAEFLALVEKFKLD, ISREESQQLIVKYDLKNNGKFAYCDFIQSCVLLLKA, MRRSFKTYDKNGTGLLSVADFRKVLRQYSIN, and LSEEEFFHVLEYYDKSLSSKISYNDFLRAFLQ. Positions 1422 to 1516 are interaction with AR; sequence NADKMKEAGM…YNDFLRAFLQ (95 aa). Ca(2+) is bound by residues aspartate 1462, asparagine 1464, threonine 1466, and aspartate 1473.

Microtubule inner protein component of sperm flagellar doublet microtubules. Binds PARK7. Part of a ternary complex containing PARK7, EFCAB6/DJBP and AR.

The protein localises to the nucleus. Its subcellular location is the cytoplasm. It localises to the cytoskeleton. The protein resides in the flagellum axoneme. Negatively regulates the androgen receptor by recruiting histone deacetylase complex, and protein DJ-1 antagonizes this inhibition by abrogation of this complex. Microtubule inner protein (MIP) part of the dynein-decorated doublet microtubules (DMTs) in cilia axoneme, which is required for motile cilia beating. In Mus musculus (Mouse), this protein is EF-hand calcium-binding domain-containing protein 6 (Efcab6).